The sequence spans 185 residues: ATP synthase subunit delta (185 aa).

It belongs to the ATPase delta chain family. As to quaternary structure, F-type ATPases have 2 components, F(1) - the catalytic core - and F(0) - the membrane proton channel. F(1) has five subunits: alpha(3), beta(3), gamma(1), delta(1), epsilon(1). F(0) has three main subunits: a(1), b(2) and c(10-14). The alpha and beta chains form an alternating ring which encloses part of the gamma chain. F(1) is attached to F(0) by a central stalk formed by the gamma and epsilon chains, while a peripheral stalk is formed by the delta and b chains.

Its subcellular location is the cell inner membrane. Functionally, f(1)F(0) ATP synthase produces ATP from ADP in the presence of a proton or sodium gradient. F-type ATPases consist of two structural domains, F(1) containing the extramembraneous catalytic core and F(0) containing the membrane proton channel, linked together by a central stalk and a peripheral stalk. During catalysis, ATP synthesis in the catalytic domain of F(1) is coupled via a rotary mechanism of the central stalk subunits to proton translocation. Its function is as follows. This protein is part of the stalk that links CF(0) to CF(1). It either transmits conformational changes from CF(0) to CF(1) or is implicated in proton conduction. This Phocaeicola vulgatus (strain ATCC 8482 / DSM 1447 / JCM 5826 / CCUG 4940 / NBRC 14291 / NCTC 11154) (Bacteroides vulgatus) protein is ATP synthase subunit delta.